The primary structure comprises 72 residues: Late effector protein 1 (72 aa).

A signal peptide spans 1–22; sequence MKCYLVVVVAALCTLVAQGSVG. An N-linked (GlcNAc...) asparagine glycan is attached at N66.

This sequence belongs to the lep1 family. Interacts at the cell wall with secreted rep1 repellent peptides.

The protein resides in the secreted. Its subcellular location is the cell wall. Its function is as follows. Core effector contributing to spore formation and tumor formation at the host plant. Modulates surface hydrophobicity promoting cell-cell or cell-surface contacts. Lep1 and rep1 interact in aerial hyphae to form a strong hydrophobic layer. Plays a crucial role in hyphal aggregation that might be a prerequisite for strong proliferation of diploid cells and for induction of the morphological changes associated with spore formation. This is Late effector protein 1 from Sporisorium reilianum (strain SRZ2) (Maize head smut fungus).